The chain runs to 669 residues: Methionine--tRNA ligase (669 aa).

The short motif at 15 to 25 is the 'HIGH' region element; it reads PYANGPAHIGH. Cysteine 146, cysteine 149, cysteine 158, and cysteine 162 together coordinate Zn(2+). The short motif at 328-332 is the 'KMSKS' region element; that stretch reads KFSKS. Lysine 331 is a binding site for ATP. The tRNA-binding domain occupies 570-669; sequence QFKALDLRVG…KEVPAGCGIR (100 aa).

The protein belongs to the class-I aminoacyl-tRNA synthetase family. MetG type 1 subfamily. As to quaternary structure, homodimer. Requires Zn(2+) as cofactor.

It is found in the cytoplasm. It catalyses the reaction tRNA(Met) + L-methionine + ATP = L-methionyl-tRNA(Met) + AMP + diphosphate. Functionally, is required not only for elongation of protein synthesis but also for the initiation of all mRNA translation through initiator tRNA(fMet) aminoacylation. This Methanothrix thermoacetophila (strain DSM 6194 / JCM 14653 / NBRC 101360 / PT) (Methanosaeta thermophila) protein is Methionine--tRNA ligase.